Here is a 101-residue protein sequence, read N- to C-terminus: Small ribosomal subunit protein uS14 (101 aa).

This sequence belongs to the universal ribosomal protein uS14 family. As to quaternary structure, part of the 30S ribosomal subunit. Contacts proteins S3 and S10.

Binds 16S rRNA, required for the assembly of 30S particles and may also be responsible for determining the conformation of the 16S rRNA at the A site. This is Small ribosomal subunit protein uS14 from Polynucleobacter necessarius subsp. necessarius (strain STIR1).